The following is a 426-amino-acid chain: Serine--tRNA ligase (426 aa).

233–235 serves as a coordination point for L-serine; it reads TAE. ATP is bound at residue 264 to 266; sequence RSE. E287 contributes to the L-serine binding site. 351-354 is an ATP binding site; the sequence is EISS. L-serine is bound at residue S387.

This sequence belongs to the class-II aminoacyl-tRNA synthetase family. Type-1 seryl-tRNA synthetase subfamily. In terms of assembly, homodimer. The tRNA molecule binds across the dimer.

It localises to the cytoplasm. It catalyses the reaction tRNA(Ser) + L-serine + ATP = L-seryl-tRNA(Ser) + AMP + diphosphate + H(+). The enzyme catalyses tRNA(Sec) + L-serine + ATP = L-seryl-tRNA(Sec) + AMP + diphosphate + H(+). It participates in aminoacyl-tRNA biosynthesis; selenocysteinyl-tRNA(Sec) biosynthesis; L-seryl-tRNA(Sec) from L-serine and tRNA(Sec): step 1/1. In terms of biological role, catalyzes the attachment of serine to tRNA(Ser). Is also able to aminoacylate tRNA(Sec) with serine, to form the misacylated tRNA L-seryl-tRNA(Sec), which will be further converted into selenocysteinyl-tRNA(Sec). The protein is Serine--tRNA ligase of Pseudomonas paraeruginosa (strain DSM 24068 / PA7) (Pseudomonas aeruginosa (strain PA7)).